A 473-amino-acid polypeptide reads, in one-letter code: Ras-GEF domain-containing family member 1B (473 aa).

Positions His-34–Ile-161 constitute an N-terminal Ras-GEF domain. The Ras-GEF domain occupies Asp-205–Pro-453.

As to quaternary structure, interacts with CCDC124 during cytokinesis. Interacts with Ras family proteins. Constitutively expressed in brain, intestine and testis. Low constitutive expression, if any, in heart, lung, lymph nodes and thymus. Up-regulated in heart, kidney, liver, lymph nodes, spleen and thymus at day 20 after infection with Trypanosoma cruzi. Not detected in muscle.

The protein resides in the early endosome. It localises to the late endosome. The protein localises to the midbody. In terms of biological role, guanine nucleotide exchange factor (GEF) with specificity for RAP2A, it doesn't seems to activate other Ras family proteins (in vitro). The polypeptide is Ras-GEF domain-containing family member 1B (Rasgef1b) (Mus musculus (Mouse)).